The chain runs to 126 residues: MPEPAKSAPAPKKGSKKALTKAQKKDGKKRKRSRKESYSVYVYKVLKQVHPDTGISSKAMGIMNSFVNDIFERIAGEASRLAHYNKRSTITSREIQTAVRLLLPGELAKHAVSEGTKAVTKYTSSK.

The segment covering 1-12 has biased composition (low complexity); that stretch reads MPEPAKSAPAPK. The interval 1 to 36 is disordered; it reads MPEPAKSAPAPKKGSKKALTKAQKKDGKKRKRSRKE. At P2 the chain carries N-acetylproline. An ADP-ribosyl glutamic acid modification is found at E3. K6 is modified (N6-(2-hydroxyisobutyryl)lysine; alternate). K6 carries the N6-(beta-hydroxybutyryl)lysine; alternate modification. An N6-acetyllysine; alternate modification is found at K6. Residue K6 is modified to N6-butyryllysine; alternate. The residue at position 6 (K6) is an N6-crotonyllysine; alternate. K6 is subject to N6-lactoyllysine; alternate. Residue K6 forms a Glycyl lysine isopeptide (Lys-Gly) (interchain with G-Cter in SUMO2); alternate linkage. ADP-ribosylserine is present on S7. Position 12 is an N6-(beta-hydroxybutyryl)lysine; alternate (K12). 2 positions are modified to N6-acetyllysine; alternate: K12 and K13. An N6-crotonyllysine; alternate mark is found at K12 and K13. At K12 the chain carries N6-lactoyllysine; alternate. Residue K13 is modified to N6-(2-hydroxyisobutyryl)lysine; alternate. S15 is subject to Phosphoserine; by STK4/MST1. An N6-acetyllysine; alternate mark is found at K16, K17, K21, and K24. N6-crotonyllysine; alternate occurs at positions 16, 17, 21, and 24. 4 positions are modified to N6-lactoyllysine; alternate: K16, K17, K21, and K24. Position 17 is an N6-glutaryllysine; alternate (K17). N6-(2-hydroxyisobutyryl)lysine; alternate is present on residues K21 and K24. K21 is subject to N6-(beta-hydroxybutyryl)lysine; alternate. Position 21 is an N6-butyryllysine; alternate (K21). K21 is covalently cross-linked (Glycyl lysine isopeptide (Lys-Gly) (interchain with G-Cter in SUMO2); alternate). Position 25 is an N6-(2-hydroxyisobutyryl)lysine (K25). An N6-(2-hydroxyisobutyryl)lysine; alternate modification is found at K35. N6-(beta-hydroxybutyryl)lysine; alternate is present on K35. N6-crotonyllysine; alternate is present on K35. The residue at position 35 (K35) is an N6-glutaryllysine; alternate. K35 carries the N6-succinyllysine; alternate modification. Residue K35 forms a Glycyl lysine isopeptide (Lys-Gly) (interchain with G-Cter in ubiquitin); alternate linkage. Residue E36 is modified to PolyADP-ribosyl glutamic acid. At S37 the chain carries Phosphoserine; by AMPK. N6-(2-hydroxyisobutyryl)lysine; alternate occurs at positions 44, 47, and 58. The residue at position 44 (K44) is an N6-lactoyllysine; alternate. An N6-glutaryllysine; alternate mark is found at K44 and K47. Position 47 is an N6-methyllysine; alternate (K47). An N6,N6-dimethyllysine; alternate modification is found at K58. The residue at position 80 (R80) is a Dimethylated arginine. K86 is modified (N6-(2-hydroxyisobutyryl)lysine; alternate). The residue at position 86 (K86) is an N6-acetyllysine; alternate. K86 is modified (N6-lactoyllysine; alternate). At K86 the chain carries N6,N6,N6-trimethyllysine; alternate. R87 and R93 each carry omega-N-methylarginine. N6-(2-hydroxyisobutyryl)lysine; alternate is present on K109. K109 carries the N6-(beta-hydroxybutyryl)lysine; alternate modification. N6-lactoyllysine; alternate is present on K109. N6-glutaryllysine; alternate is present on K109. The residue at position 109 (K109) is an N6-methyllysine; alternate. O-linked (GlcNAc) serine glycosylation occurs at S113. T116 carries the phosphothreonine modification. N6-(2-hydroxyisobutyryl)lysine; alternate occurs at positions 117 and 121. Position 117 is an N6-(beta-hydroxybutyryl)lysine; alternate (K117). K117 and K121 each carry N6-lactoyllysine; alternate. Residues K117 and K121 each carry the N6-glutaryllysine; alternate modification. 2 positions are modified to N6-succinyllysine; alternate: K117 and K121. K117 is modified (N6-methylated lysine; alternate). K121 participates in a covalent cross-link: Glycyl lysine isopeptide (Lys-Gly) (interchain with G-Cter in ubiquitin); alternate.

Belongs to the histone H2B family. The nucleosome is a histone octamer containing two molecules each of H2A, H2B, H3 and H4 assembled in one H3-H4 heterotetramer and two H2A-H2B heterodimers. The octamer wraps approximately 147 bp of DNA. Post-translationally, monoubiquitination at Lys-35 (H2BK34Ub) by the MSL1/MSL2 dimer is required for histone H3 'Lys-4' (H3K4me) and 'Lys-79' (H3K79me) methylation and transcription activation at specific gene loci, such as HOXA9 and MEIS1 loci. Similarly, monoubiquitination at Lys-121 (H2BK120Ub) by the RNF20/40 complex gives a specific tag for epigenetic transcriptional activation and is also prerequisite for histone H3 'Lys-4' and 'Lys-79' methylation. It also functions cooperatively with the FACT dimer to stimulate elongation by RNA polymerase II. H2BK120Ub also acts as a regulator of mRNA splicing: deubiquitination by USP49 is required for efficient cotranscriptional splicing of a large set of exons. In terms of processing, phosphorylated on Ser-15 (H2BS14ph) by STK4/MST1 during apoptosis; which facilitates apoptotic chromatin condensation. Also phosphorylated on Ser-15 in response to DNA double strand breaks (DSBs), and in correlation with somatic hypermutation and immunoglobulin class-switch recombination. Phosphorylation at Ser-37 (H2BS36ph) by AMPK in response to stress promotes transcription. GlcNAcylation at Ser-113 promotes monoubiquitination of Lys-121. It fluctuates in response to extracellular glucose, and associates with transcribed genes. Post-translationally, ADP-ribosylated by PARP1 or PARP2 on Ser-7 (H2BS6ADPr) in response to DNA damage. H2BS6ADPr promotes recruitment of CHD1L. Mono-ADP-ribosylated on Glu-3 (H2BE2ADPr) by PARP3 in response to single-strand breaks. Poly ADP-ribosylation on Glu-36 (H2BE35ADPr) by PARP1 regulates adipogenesis: it inhibits phosphorylation at Ser-37 (H2BS36ph), thereby blocking expression of pro-adipogenetic genes. In terms of processing, crotonylation (Kcr) is specifically present in male germ cells and marks testis-specific genes in post-meiotic cells, including X-linked genes that escape sex chromosome inactivation in haploid cells. Crotonylation marks active promoters and enhancers and confers resistance to transcriptional repressors. It is also associated with post-meiotically activated genes on autosomes. Hydroxybutyrylation of histones is induced by starvation. Post-translationally, lactylated in macrophages by EP300/P300 by using lactoyl-CoA directly derived from endogenous or exogenous lactate, leading to stimulates gene transcription.

It localises to the nucleus. It is found in the chromosome. Core component of nucleosome. Nucleosomes wrap and compact DNA into chromatin, limiting DNA accessibility to the cellular machineries which require DNA as a template. Histones thereby play a central role in transcription regulation, DNA repair, DNA replication and chromosomal stability. DNA accessibility is regulated via a complex set of post-translational modifications of histones, also called histone code, and nucleosome remodeling. This chain is Histone H2B type 1-H, found in Mus musculus (Mouse).